We begin with the raw amino-acid sequence, 258 residues long: Acyl-[acyl-carrier-protein]--UDP-N-acetylglucosamine O-acyltransferase (258 aa).

It belongs to the transferase hexapeptide repeat family. LpxA subfamily. As to quaternary structure, homotrimer.

The protein resides in the cytoplasm. The catalysed reaction is a (3R)-hydroxyacyl-[ACP] + UDP-N-acetyl-alpha-D-glucosamine = a UDP-3-O-[(3R)-3-hydroxyacyl]-N-acetyl-alpha-D-glucosamine + holo-[ACP]. Its pathway is glycolipid biosynthesis; lipid IV(A) biosynthesis; lipid IV(A) from (3R)-3-hydroxytetradecanoyl-[acyl-carrier-protein] and UDP-N-acetyl-alpha-D-glucosamine: step 1/6. Its function is as follows. Involved in the biosynthesis of lipid A, a phosphorylated glycolipid that anchors the lipopolysaccharide to the outer membrane of the cell. This is Acyl-[acyl-carrier-protein]--UDP-N-acetylglucosamine O-acyltransferase from Thermodesulfovibrio yellowstonii (strain ATCC 51303 / DSM 11347 / YP87).